Consider the following 195-residue polypeptide: Rubrerythrin-1 (195 aa).

The 148-residue stretch at 3 to 150 (SLKGTKTAEN…ALLKNIEENK (148 aa)) folds into the Ferritin-like diiron domain. Positions 20, 53, 98, 101, 132, 135, 162, 165, 178, and 181 each coordinate Fe(3+). A Rubredoxin-like domain is found at 157-191 (VKFWKCIKCGYIFEGKTAPKVCPACLHPQAYFEIL).

In terms of assembly, homodimer. Requires Fe(3+) as cofactor.

The catalysed reaction is H2O2 + NADH + H(+) = NAD(+) + 2 H2O. With respect to regulation, rubredoxin (Rd) increases the NADH consumption rate by serving as an intermediary electron-transfer shuttle between NROR and RubY. Functionally, functions as the terminal component of an NADH peroxidase (NADH:H(2)O(2) oxidoreductase) when using NADH:rubredoxin oxidoreductase (NROR) as the electron transport intermediary from NADH to RubY. In Clostridium acetobutylicum (strain ATCC 824 / DSM 792 / JCM 1419 / IAM 19013 / LMG 5710 / NBRC 13948 / NRRL B-527 / VKM B-1787 / 2291 / W), this protein is Rubrerythrin-1 (rbr1).